Reading from the N-terminus, the 297-residue chain is Mitochondrial nicotinamide adenine dinucleotide transporter SLC25A51 (297 aa).

Basic and acidic residues predominate over residues Met1–Pro11. A disordered region spans residues Met1 to Asp20. 3 Solcar repeats span residues Val28–Leu108, Pro116–His200, and Asn213–Val296. Helical transmembrane passes span Cys36 to Phe56, Leu85 to Leu105, Pro116 to Phe135, Ile179 to Glu199, Phe215 to Val235, and Leu268 to Thr289.

Belongs to the mitochondrial carrier (TC 2.A.29) family.

It localises to the mitochondrion inner membrane. It carries out the reaction NAD(+)(in) = NAD(+)(out). Its function is as follows. Mitochondrial membrane carrier protein that mediates the import of NAD(+) into mitochondria. Mitochondrial NAD(+) is required for glycolysis and mitochondrial respiration. Compared to SLC25A52, SLC25A51-mediated transport is essential for the import of NAD(+) in mitochondria. The transport mechanism, uniport or antiport, its electrogenicity and substrate selectivity, remain to be elucidated. This chain is Mitochondrial nicotinamide adenine dinucleotide transporter SLC25A51, found in Homo sapiens (Human).